The chain runs to 126 residues: Glycine cleavage system H protein (126 aa).

The 83-residue stretch at 24–106 (TVTVGITDHA…YGEGWMYRIK (83 aa)) folds into the Lipoyl-binding domain. Lys65 is subject to N6-lipoyllysine.

It belongs to the GcvH family. The glycine cleavage system is composed of four proteins: P, T, L and H. Requires (R)-lipoate as cofactor.

Functionally, the glycine cleavage system catalyzes the degradation of glycine. The H protein shuttles the methylamine group of glycine from the P protein to the T protein. This chain is Glycine cleavage system H protein, found in Psychrobacter sp. (strain PRwf-1).